Consider the following 113-residue polypeptide: UPF0342 protein spyM18_0873 (113 aa).

This sequence belongs to the UPF0342 family.

This Streptococcus pyogenes serotype M18 (strain MGAS8232) protein is UPF0342 protein spyM18_0873.